Reading from the N-terminus, the 453-residue chain is Cytochrome b-c1 complex subunit 2, mitochondrial (453 aa).

The N-terminal 14 residues, 1 to 14, are a transit peptide targeting the mitochondrion; that stretch reads MKLLTRAGSLSRFY. An N6-acetyllysine mark is found at lysine 66, lysine 199, and lysine 250.

The protein belongs to the peptidase M16 family. UQCRC2/QCR2 subfamily. As to quaternary structure, component of the ubiquinol-cytochrome c oxidoreductase (cytochrome b-c1 complex, complex III, CIII), a multisubunit enzyme composed of 11 subunits. The complex is composed of 3 respiratory subunits cytochrome b, cytochrome c1 and Rieske protein UQCRFS1, 2 core protein subunits UQCRC1/QCR1 and UQCRC2/QCR2, and 6 low-molecular weight protein subunits UQCRH/QCR6, UQCRB/QCR7, UQCRQ/QCR8, UQCR10/QCR9, UQCR11/QCR10 and subunit 9, the cleavage product of Rieske protein UQCRFS1. The complex exists as an obligatory dimer and forms supercomplexes (SCs) in the inner mitochondrial membrane with NADH-ubiquinone oxidoreductase (complex I, CI) and cytochrome c oxidase (complex IV, CIV), resulting in different assemblies (supercomplex SCI(1)III(2)IV(1) and megacomplex MCI(2)III(2)IV(2)). Interacts with RAB5IF. Interacts with STMP1.

It is found in the mitochondrion inner membrane. Component of the ubiquinol-cytochrome c oxidoreductase, a multisubunit transmembrane complex that is part of the mitochondrial electron transport chain which drives oxidative phosphorylation. The respiratory chain contains 3 multisubunit complexes succinate dehydrogenase (complex II, CII), ubiquinol-cytochrome c oxidoreductase (cytochrome b-c1 complex, complex III, CIII) and cytochrome c oxidase (complex IV, CIV), that cooperate to transfer electrons derived from NADH and succinate to molecular oxygen, creating an electrochemical gradient over the inner membrane that drives transmembrane transport and the ATP synthase. The cytochrome b-c1 complex catalyzes electron transfer from ubiquinol to cytochrome c, linking this redox reaction to translocation of protons across the mitochondrial inner membrane, with protons being carried across the membrane as hydrogens on the quinol. In the process called Q cycle, 2 protons are consumed from the matrix, 4 protons are released into the intermembrane space and 2 electrons are passed to cytochrome c. The 2 core subunits UQCRC1/QCR1 and UQCRC2/QCR2 are homologous to the 2 mitochondrial-processing peptidase (MPP) subunits beta-MPP and alpha-MPP respectively, and they seem to have preserved their MPP processing properties. May be involved in the in situ processing of UQCRFS1 into the mature Rieske protein and its mitochondrial targeting sequence (MTS)/subunit 9 when incorporated into complex III. The chain is Cytochrome b-c1 complex subunit 2, mitochondrial (UQCRC2) from Bos taurus (Bovine).